Consider the following 238-residue polypeptide: Ribosomal RNA small subunit methyltransferase I (238 aa).

Belongs to the methyltransferase superfamily. RsmI family.

It localises to the cytoplasm. The catalysed reaction is cytidine(1402) in 16S rRNA + S-adenosyl-L-methionine = 2'-O-methylcytidine(1402) in 16S rRNA + S-adenosyl-L-homocysteine + H(+). Catalyzes the 2'-O-methylation of the ribose of cytidine 1402 (C1402) in 16S rRNA. This Mesomycoplasma conjunctivae (strain ATCC 25834 / NCTC 10147 / HRC/581) (Mycoplasma conjunctivae) protein is Ribosomal RNA small subunit methyltransferase I.